The sequence spans 97 residues: Large ribosomal subunit protein bL28 (97 aa).

This sequence belongs to the bacterial ribosomal protein bL28 family.

This chain is Large ribosomal subunit protein bL28, found in Rhizorhabdus wittichii (strain DSM 6014 / CCUG 31198 / JCM 15750 / NBRC 105917 / EY 4224 / RW1) (Sphingomonas wittichii).